A 66-amino-acid chain; its full sequence is Beta-mammal toxin Co3 (66 aa).

The region spanning 1–66 (KEGYIVNYYD…VWPLPNKTCN (66 aa)) is the LCN-type CS-alpha/beta domain. Cystine bridges form between Cys-12–Cys-65, Cys-16–Cys-41, Cys-25–Cys-46, and Cys-29–Cys-48.

In terms of tissue distribution, expressed by the venom gland.

The protein localises to the secreted. Its function is as follows. Beta toxins bind voltage-independently at site-4 of sodium channels (Nav) and shift the voltage of activation toward more negative potentials thereby affecting sodium channel activation and promoting spontaneous and repetitive firing. This toxin acts on human Nav1.2/SCN2A, Nav1.4/SCN4A and Nav1.6/SCN8A voltage-gated sodium channels. Also, it reduces the peak of sodium currents in Nav1.5/SCN5A at all potentials. In vivo, is lethal to mice when intraperitoneally injected at a dose of 5ug. No activity is observed when injected into crickets or woodlice. The protein is Beta-mammal toxin Co3 of Centruroides ornatus (Scorpion).